Reading from the N-terminus, the 1001-residue chain is 2-oxoglutarate dehydrogenase E1 component (1001 aa).

The protein belongs to the alpha-ketoglutarate dehydrogenase family. In terms of assembly, homodimer. Part of the 2-oxoglutarate dehydrogenase (OGDH) complex composed of E1 (2-oxoglutarate dehydrogenase), E2 (dihydrolipoamide succinyltransferase) and E3 (dihydrolipoamide dehydrogenase); the complex contains multiple copies of the three enzymatic components (E1, E2 and E3). Thiamine diphosphate is required as a cofactor.

The catalysed reaction is N(6)-[(R)-lipoyl]-L-lysyl-[protein] + 2-oxoglutarate + H(+) = N(6)-[(R)-S(8)-succinyldihydrolipoyl]-L-lysyl-[protein] + CO2. Its function is as follows. E1 component of the 2-oxoglutarate dehydrogenase (OGDH) complex which catalyzes the decarboxylation of 2-oxoglutarate, the first step in the conversion of 2-oxoglutarate to succinyl-CoA and CO(2). The polypeptide is 2-oxoglutarate dehydrogenase E1 component (Brucella anthropi (strain ATCC 49188 / DSM 6882 / CCUG 24695 / JCM 21032 / LMG 3331 / NBRC 15819 / NCTC 12168 / Alc 37) (Ochrobactrum anthropi)).